We begin with the raw amino-acid sequence, 631 residues long: Methanol dehydrogenase [cytochrome c] subunit 1 (631 aa).

A signal peptide spans 1 to 32; that stretch reads MNRNTPKARGASSLAMAVAMGLAVLTTAPATA. Cysteines 135 and 136 form a disulfide. Glutamate 209 and asparagine 293 together coordinate Ca(2+). Aspartate 335 functions as the Proton acceptor in the catalytic mechanism. Residues cysteine 418 and cysteine 447 are joined by a disulfide bond.

It belongs to the bacterial PQQ dehydrogenase family. Heterotetramer composed of 2 alpha and 2 beta subunits. Pyrroloquinoline quinone serves as cofactor. The cofactor is Ca(2+).

Its subcellular location is the periplasm. It catalyses the reaction 2 Fe(III)-[cytochrome cL] + a primary alcohol = 2 Fe(II)-[cytochrome cL] + an aldehyde + 2 H(+). Functionally, catalyzes the oxidation of primary alcohols including methanol. The protein is Methanol dehydrogenase [cytochrome c] subunit 1 (moxF) of Paracoccus denitrificans.